Here is a 138-residue protein sequence, read N- to C-terminus: Large ribosomal subunit protein bL17 (138 aa).

This sequence belongs to the bacterial ribosomal protein bL17 family. In terms of assembly, part of the 50S ribosomal subunit. Contacts protein L32.

In Dinoroseobacter shibae (strain DSM 16493 / NCIMB 14021 / DFL 12), this protein is Large ribosomal subunit protein bL17.